Reading from the N-terminus, the 200-residue chain is Large ribosomal subunit protein bL25 (200 aa).

It belongs to the bacterial ribosomal protein bL25 family. CTC subfamily. In terms of assembly, part of the 50S ribosomal subunit; part of the 5S rRNA/L5/L18/L25 subcomplex. Contacts the 5S rRNA. Binds to the 5S rRNA independently of L5 and L18.

In terms of biological role, this is one of the proteins that binds to the 5S RNA in the ribosome where it forms part of the central protuberance. This is Large ribosomal subunit protein bL25 from Pseudomonas fluorescens (strain SBW25).